Consider the following 432-residue polypeptide: Cytochrome c biogenesis protein CcsB (432 aa).

A run of 3 helical transmembrane segments spans residues 18-38 (LRLA…GTGI), 76-96 (SGWF…CSWR), and 166-186 (VGPL…AWGA).

It belongs to the Ccs1/CcsB family. In terms of assembly, may interact with CcsA.

The protein resides in the cellular thylakoid membrane. Required during biogenesis of c-type cytochromes (cytochrome c6 and cytochrome f) at the step of heme attachment. In Synechococcus sp. (strain CC9605), this protein is Cytochrome c biogenesis protein CcsB.